Reading from the N-terminus, the 95-residue chain is Protein TusB (95 aa).

The protein belongs to the DsrH/TusB family. Heterohexamer, formed by a dimer of trimers. The hexameric TusBCD complex contains 2 copies each of TusB, TusC and TusD. The TusBCD complex interacts with TusE.

It is found in the cytoplasm. Its function is as follows. Part of a sulfur-relay system required for 2-thiolation of 5-methylaminomethyl-2-thiouridine (mnm(5)s(2)U) at tRNA wobble positions. This chain is Protein TusB, found in Escherichia coli (strain ATCC 8739 / DSM 1576 / NBRC 3972 / NCIMB 8545 / WDCM 00012 / Crooks).